A 315-amino-acid polypeptide reads, in one-letter code: Energy-coupling factor transporter ATP-binding protein EcfA2 (315 aa).

In terms of domain architecture, ABC transporter spans 31-275 (IILDNVSYTY…QELLSKIQIE (245 aa)). 68–75 (GTTGSGKS) contacts ATP.

The protein belongs to the ABC transporter superfamily. Energy-coupling factor EcfA family. Forms a stable energy-coupling factor (ECF) transporter complex composed of 2 membrane-embedded substrate-binding proteins (S component), 2 ATP-binding proteins (A component) and 2 transmembrane proteins (T component).

Its subcellular location is the cell membrane. Its function is as follows. ATP-binding (A) component of a common energy-coupling factor (ECF) ABC-transporter complex. Unlike classic ABC transporters this ECF transporter provides the energy necessary to transport a number of different substrates. The protein is Energy-coupling factor transporter ATP-binding protein EcfA2 of Mesoplasma florum (strain ATCC 33453 / NBRC 100688 / NCTC 11704 / L1) (Acholeplasma florum).